A 290-amino-acid chain; its full sequence is RWD domain-containing protein 2B (290 aa).

The RWD domain maps to 12-136; the sequence is SELDLLASMF…EWVKEHAFDY (125 aa).

The protein is RWD domain-containing protein 2B (Rwdd2b) of Mus musculus (Mouse).